A 273-amino-acid chain; its full sequence is Ribosomal RNA small subunit methyltransferase A (273 aa).

The S-adenosyl-L-methionine site is built by asparagine 18, leucine 20, glycine 45, glutamate 66, aspartate 91, and asparagine 113.

It belongs to the class I-like SAM-binding methyltransferase superfamily. rRNA adenine N(6)-methyltransferase family. RsmA subfamily.

Its subcellular location is the cytoplasm. The catalysed reaction is adenosine(1518)/adenosine(1519) in 16S rRNA + 4 S-adenosyl-L-methionine = N(6)-dimethyladenosine(1518)/N(6)-dimethyladenosine(1519) in 16S rRNA + 4 S-adenosyl-L-homocysteine + 4 H(+). Specifically dimethylates two adjacent adenosines (A1518 and A1519) in the loop of a conserved hairpin near the 3'-end of 16S rRNA in the 30S particle. May play a critical role in biogenesis of 30S subunits. The protein is Ribosomal RNA small subunit methyltransferase A of Klebsiella pneumoniae subsp. pneumoniae (strain ATCC 700721 / MGH 78578).